We begin with the raw amino-acid sequence, 60 residues long: Mastoparan-B (60 aa).

A signal peptide spans 1 to 27; the sequence is MKNTILILFTAFIALLGFFGMSAEALA. 4 AXPX repeats span residues 27 to 30, 31 to 34, 35 to 38, and 41 to 44; these read ADPL, AEPL, ADPN, and ADPE. Residues 28–45 constitute a propeptide that is removed on maturation; that stretch reads DPLAEPLADPNAEADPEA. Leucine 59 carries the leucine amide modification.

This sequence belongs to the MCD family. Mastoparan subfamily. In terms of tissue distribution, expressed by the venom gland.

Its subcellular location is the secreted. It is found in the target cell membrane. In terms of biological role, antimicrobial and mast cell degranulating peptide. Has broad spectrum antibacterial activity against both Gram-positive (S.aureus MIC=96-128 ug/ml, S.xylosus MIC=2 ug/ml, S.alactolyticus MIC=32 ug/ml, and S.choleraesuis MIC=32 ug/ml) and Gram-negative bacteria (C.koseri MIC=6 ug/ml, E.coli MIC=3-16 ug/ml, K.pneumoniae MIC=128 ug/ml, P.aerugiosa MIC=128 ug/ml, S.typhimurium MIC=64 ug/ml, V.parahamelytics MIC=32 ug/ml, and S.enterica), as well as on fungi (C.albicans, C.glabrata, and C.neoformans). Does not show antimicrobial activity against S.mutans. Affects membrane permeability of E.coli. Also acts as a mast cell degranulating peptide, that causes liberation of histamine from rat peritoneal mast cells. Its mast cell degranulation activity may be related to the activation of G-protein coupled receptors in mast cells as well as interaction with other proteins located in cell endosomal membranes in the mast cells. Whether this peptide shows hemolytic activities is controversial, as Lin et al., 2011 and Ho et al., 1991 found a hemolytic activity on sheep, chicken and human erythrocytes, whereas Kim et al., 2016 found no hemolytic activity on human erythrocytes. In vivo, induces edema in the rat paw. The chain is Mastoparan-B from Vespa basalis (Hornet).